The sequence spans 254 residues: 3-deoxy-manno-octulosonate cytidylyltransferase (254 aa).

This sequence belongs to the KdsB family.

Its subcellular location is the cytoplasm. The catalysed reaction is 3-deoxy-alpha-D-manno-oct-2-ulosonate + CTP = CMP-3-deoxy-beta-D-manno-octulosonate + diphosphate. Its pathway is nucleotide-sugar biosynthesis; CMP-3-deoxy-D-manno-octulosonate biosynthesis; CMP-3-deoxy-D-manno-octulosonate from 3-deoxy-D-manno-octulosonate and CTP: step 1/1. It functions in the pathway bacterial outer membrane biogenesis; lipopolysaccharide biosynthesis. Functionally, activates KDO (a required 8-carbon sugar) for incorporation into bacterial lipopolysaccharide in Gram-negative bacteria. The polypeptide is 3-deoxy-manno-octulosonate cytidylyltransferase (Haemophilus influenzae (strain PittGG)).